We begin with the raw amino-acid sequence, 223 residues long: Putative 3-methyladenine DNA glycosylase (223 aa).

This sequence belongs to the DNA glycosylase MPG family.

The sequence is that of Putative 3-methyladenine DNA glycosylase from Pseudomonas syringae pv. syringae (strain B728a).